Consider the following 389-residue polypeptide: Agamous-like MADS-box protein AGL65 (389 aa).

Positions 1–61 (MGRVKLKIKR…GRATAFHGEH (61 aa)) constitute an MADS-box domain. Coiled-coil stretches lie at residues 77-131 (QERT…LMEC) and 293-325 (GMEEDQEKKIKSEMELNNLQQQQQQQQQQQQQD). Positions 310–343 (NLQQQQQQQQQQQQQDPSMYDPMANNNGGCFQIP) are disordered. The span at 312-324 (QQQQQQQQQQQQQ) shows a compositional bias: low complexity.

Forms a heterodimer with AGL104. Expressed in pollen.

It localises to the nucleus. Functionally, probable transcription factor that forms a heterodimer with the MADS-box protein AGL104 and is involved in the regulation of pollen maturation at the late stages of pollen development and pollen tube growth. The chain is Agamous-like MADS-box protein AGL65 from Arabidopsis thaliana (Mouse-ear cress).